The following is a 714-amino-acid chain: Methyl-accepting chemotaxis protein TlpQ (714 aa).

The helical transmembrane segment at 12–32 (ITLLAGLCLLGVVALLVGLSV) threads the bilayer. A Cache domain is found at 50 to 290 (LDESARLRLE…LLGKNLAKAD (241 aa)). Residues E170, 208 to 210 (YFD), and D239 contribute to the histamine site. The chain crosses the membrane as a helical span at residues 360-380 (TWVELGLGLGAAVLGLLVLWL). The HAMP domain maps to 383 to 437 (RGVTRPILGVAHMLRDIASGEGDLTQRLPHTGRDELGELAGWFNRFLDKLQPIIR). Residues 442-678 (SVRDARSTAD…EINRNVAAIR (237 aa)) form the Methyl-accepting transducer domain.

It belongs to the methyl-accepting chemotaxis (MCP) protein family. In terms of assembly, homotetramer.

It is found in the cell membrane. Functionally, chemotactic-signal transducers respond to changes in the concentration of attractants and repellents in the environment, transduce a signal from the outside to the inside of the cell, and facilitate sensory adaptation through the variation of the level of methylation. TlpQ is a chemoreceptor that binds and mediates chemotaxis to histamine, a key biological signaling molecule. It binds histamine with high affinity, which permits responses to very low histamine concentrations. Chemotaxis to histamine may play a role in the virulence of P.aeruginosa by recruiting cells at the infection site and consequently modulating the expression of quorum-sensing-dependent virulence genes. TlpQ also binds and mediates chemotaxis to polyamines such as putrescine, spermidine, cadaverine, agmatine and ethylenediamine. In addition, binds the quorum-sensing signal autoinducer 2 (AI-2), thus inducing chemotaxis toward AI-2 and biofilm formation. This Pseudomonas aeruginosa (strain ATCC 15692 / DSM 22644 / CIP 104116 / JCM 14847 / LMG 12228 / 1C / PRS 101 / PAO1) protein is Methyl-accepting chemotaxis protein TlpQ.